Here is a 257-residue protein sequence, read N- to C-terminus: Phosphate import ATP-binding protein PstB (257 aa).

An ABC transporter domain is found at 11–252; the sequence is IQVRDLNFYY…PAKKQTEDYI (242 aa). Residue 43–50 participates in ATP binding; the sequence is GPSGSGKS.

The protein belongs to the ABC transporter superfamily. Phosphate importer (TC 3.A.1.7) family. The complex is composed of two ATP-binding proteins (PstB), two transmembrane proteins (PstC and PstA) and a solute-binding protein (PstS).

Its subcellular location is the cell inner membrane. It catalyses the reaction phosphate(out) + ATP + H2O = ADP + 2 phosphate(in) + H(+). Functionally, part of the ABC transporter complex PstSACB involved in phosphate import. Responsible for energy coupling to the transport system. This chain is Phosphate import ATP-binding protein PstB, found in Salmonella choleraesuis (strain SC-B67).